Here is a 342-residue protein sequence, read N- to C-terminus: Putative TPR repeat-containing protein R856 (342 aa).

TPR repeat units lie at residues 36–69, 77–110, 119–152, 161–194, 203–236, 245–278, and 291–324; these read VHIFNKAAIVFHRNGQHKKSLEMYEKAFGNIFNG, FYSVNGMASMYQALGDYDIAIKKYNSVIKIIKDM, VYALMGIASISQIKGNYDEALSKYNEALEINEKL, AFVLNRLGMLYHELDDNDKSIDHFNESLKIYREK, AFTISRLAQSLLKMGNDSEALEKYQESIDIFNKI, AFSLYGIGTVYEFRSEYSKALEKYQESLQTYKNV, and ASCLYKIGLVYKLSGNDNESTTYLNQANQMFEST.

This chain is Putative TPR repeat-containing protein R856, found in Acanthamoeba polyphaga mimivirus (APMV).